Here is a 201-residue protein sequence, read N- to C-terminus: 3-isopropylmalate dehydratase small subunit (201 aa).

Belongs to the LeuD family. LeuD type 1 subfamily. Heterodimer of LeuC and LeuD.

It carries out the reaction (2R,3S)-3-isopropylmalate = (2S)-2-isopropylmalate. It functions in the pathway amino-acid biosynthesis; L-leucine biosynthesis; L-leucine from 3-methyl-2-oxobutanoate: step 2/4. Functionally, catalyzes the isomerization between 2-isopropylmalate and 3-isopropylmalate, via the formation of 2-isopropylmaleate. This Brucella anthropi (strain ATCC 49188 / DSM 6882 / CCUG 24695 / JCM 21032 / LMG 3331 / NBRC 15819 / NCTC 12168 / Alc 37) (Ochrobactrum anthropi) protein is 3-isopropylmalate dehydratase small subunit.